Here is a 213-residue protein sequence, read N- to C-terminus: Orotate phosphoribosyltransferase (213 aa).

Residue Lys-26 coordinates 5-phospho-alpha-D-ribose 1-diphosphate. 34–35 (FF) contacts orotate. 5-phospho-alpha-D-ribose 1-diphosphate is bound by residues 72–73 (YK), Arg-99, Lys-100, Lys-103, His-105, and 124–132 (DDVITAGTA). Positions 128 and 156 each coordinate orotate.

This sequence belongs to the purine/pyrimidine phosphoribosyltransferase family. PyrE subfamily. As to quaternary structure, homodimer. Requires Mg(2+) as cofactor.

The enzyme catalyses orotidine 5'-phosphate + diphosphate = orotate + 5-phospho-alpha-D-ribose 1-diphosphate. It functions in the pathway pyrimidine metabolism; UMP biosynthesis via de novo pathway; UMP from orotate: step 1/2. Catalyzes the transfer of a ribosyl phosphate group from 5-phosphoribose 1-diphosphate to orotate, leading to the formation of orotidine monophosphate (OMP). The polypeptide is Orotate phosphoribosyltransferase (Shigella flexneri serotype 5b (strain 8401)).